The sequence spans 153 residues: MTKIKADPDGPEAQAEACSGERTYQELLVNQNPIAQPLASRRLTRKLYKCIKKAVKQKQIRRGVKEVQKFVNKGEKGIMVLAGDTLPIEVYCHLPVMCEDRNLPYVYIPSKTDLGAAAGSKRPTCVIMVKPHDEYQEAYDECLEEVQSLPLPL.

Lys3 is covalently cross-linked (Glycyl lysine isopeptide (Lys-Gly) (interchain with G-Cter in SUMO2)). A Glycyl lysine isopeptide (Lys-Gly) (interchain with G-Cter in SUMO); alternate cross-link involves residue Lys5. Residue Lys5 forms a Glycyl lysine isopeptide (Lys-Gly) (interchain with G-Cter in SUMO1); alternate linkage. Residue Lys5 forms a Glycyl lysine isopeptide (Lys-Gly) (interchain with G-Cter in SUMO2); alternate linkage. Ser19 is modified (phosphoserine).

The protein belongs to the eukaryotic ribosomal protein eL8 family. In terms of assembly, part of the H/ACA small nucleolar ribonucleoprotein (H/ACA snoRNP) complex, which contains NHP2/NOLA2, GAR1/NOLA1, NOP10/NOLA3, and DKC1/NOLA4, which is presumed to be the catalytic subunit. The complex contains a stable core formed by binding of one or two NOP10-DKC1 heterodimers to NHP2; GAR1 subsequently binds to this core via DKC1. The complex binds a box H/ACA small nucleolar RNA (snoRNA), which may target the specific site of modification within the RNA substrate. During assembly, the complex contains NAF1 instead of GAR1/NOLA1. The complex also interacts with TERC, which contains a 3'-terminal domain related to the box H/ACA snoRNAs. Specific interactions with snoRNAs or TERC are mediated by GAR1 and NHP2. Associates with NOLC1/NOPP140. H/ACA snoRNPs interact with the SMN complex, consisting of SMN1 or SMN2, GEMIN2/SIP1, DDX20/GEMIN3, and GEMIN4. This is mediated by interaction between GAR1 and SMN1 or SMN2. The SMN complex may be required for correct assembly of the H/ACA snoRNP complex. Component of the telomerase holoenzyme complex composed of one molecule of TERT, one molecule of WRAP53/TCAB1, two molecules of H/ACA ribonucleoprotein complex subunits DKC1, NOP10, NHP2 and GAR1, and a telomerase RNA template component (TERC). The telomerase holoenzyme complex is associated with TEP1, SMG6/EST1A and POT1.

It localises to the nucleus. The protein localises to the nucleolus. Its subcellular location is the cajal body. Required for ribosome biogenesis and telomere maintenance. Part of the H/ACA small nucleolar ribonucleoprotein (H/ACA snoRNP) complex, which catalyzes pseudouridylation of rRNA. This involves the isomerization of uridine such that the ribose is subsequently attached to C5, instead of the normal N1. Each rRNA can contain up to 100 pseudouridine ('psi') residues, which may serve to stabilize the conformation of rRNAs. May also be required for correct processing or intranuclear trafficking of TERC, the RNA component of the telomerase reverse transcriptase (TERT) holoenzyme. The polypeptide is H/ACA ribonucleoprotein complex subunit 2 (NHP2) (Pongo abelii (Sumatran orangutan)).